Consider the following 726-residue polypeptide: WD repeat-containing and planar cell polarity effector protein fritz homolog (726 aa).

WD repeat units follow at residues 305-343 and 344-383; these read LRSK…TLLA and QAEL…INIQ. Residues 642–660 are compositionally biased toward polar residues; sequence SSGSTPKHTIQQKIPNGPS. The disordered stretch occupies residues 642 to 717; that stretch reads SSGSTPKHTI…RRQDTEDVGS (76 aa). Over residues 672 to 685 the composition is skewed to acidic residues; the sequence is MEETEEEEEEEEEA. Positions 701–712 are enriched in basic and acidic residues; sequence GELREDHRRQDT.

It belongs to the WD repeat fritz family. In terms of assembly, component of the CPLANE (ciliogenesis and planar polarity effectors) complex, composed of INTU, FUZ and WDPCP. Interacts with CPLANE1.

It localises to the cell membrane. Its subcellular location is the cytoplasm. The protein localises to the cytoskeleton. It is found in the cilium axoneme. The protein resides in the cilium basal body. Probable effector of the planar cell polarity signaling pathway which regulates the septin cytoskeleton in both ciliogenesis and collective cell movements. Together with FUZ and WDPCP proposed to function as core component of the CPLANE (ciliogenesis and planar polarity effectors) complex involved in the recruitment of peripheral IFT-A proteins to basal bodies. Binds phosphatidylinositol 3-phosphate with highest affinity, followed by phosphatidylinositol 4-phosphate and phosphatidylinositol 5-phosphate. This is WD repeat-containing and planar cell polarity effector protein fritz homolog (Wdpcp) from Rattus norvegicus (Rat).